The following is a 447-amino-acid chain: Tubulin beta-1 chain (447 aa).

8 residues coordinate GTP: glutamine 11, glutamate 69, serine 138, glycine 142, threonine 143, glycine 144, asparagine 204, and asparagine 226. Glutamate 69 is a binding site for Mg(2+).

This sequence belongs to the tubulin family. As to quaternary structure, dimer of alpha and beta chains. A typical microtubule is a hollow water-filled tube with an outer diameter of 25 nm and an inner diameter of 15 nM. Alpha-beta heterodimers associate head-to-tail to form protofilaments running lengthwise along the microtubule wall with the beta-tubulin subunit facing the microtubule plus end conferring a structural polarity. Microtubules usually have 13 protofilaments but different protofilament numbers can be found in some organisms and specialized cells. It depends on Mg(2+) as a cofactor.

It is found in the cytoplasm. It localises to the cytoskeleton. Tubulin is the major constituent of microtubules, a cylinder consisting of laterally associated linear protofilaments composed of alpha- and beta-tubulin heterodimers. Microtubules grow by the addition of GTP-tubulin dimers to the microtubule end, where a stabilizing cap forms. Below the cap, tubulin dimers are in GDP-bound state, owing to GTPase activity of alpha-tubulin. The protein is Tubulin beta-1 chain of Geotrichum candidum (Oospora lactis).